The sequence spans 54 residues: IASVNCSDYPKPVCSLLYMPLCGSDNKTYGNKCNFCNAVADSNGTLTLSHFGKC.

Positions 4 to 54 constitute a Kazal-like domain; the sequence is VNCSDYPKPVCSLLYMPLCGSDNKTYGNKCNFCNAVADSNGTLTLSHFGKC. Intrachain disulfides connect cysteine 6–cysteine 36, cysteine 14–cysteine 33, and cysteine 22–cysteine 54. The N-linked (GlcNAc...) asparagine glycan is linked to asparagine 43.

The protein localises to the secreted. This Geococcyx californianus (Greater roadrunner) protein is Ovomucoid.